A 498-amino-acid chain; its full sequence is Glycerol kinase (498 aa).

ADP is bound at residue Thr12. The ATP site is built by Thr12, Thr13, and Ser14. Thr12 lines the sn-glycerol 3-phosphate pocket. An ADP-binding site is contributed by Arg16. Arg82, Glu83, and Tyr134 together coordinate sn-glycerol 3-phosphate. Residues Arg82, Glu83, and Tyr134 each contribute to the glycerol site. The residue at position 230 (His230) is a Phosphohistidine; by HPr. Residue Asp244 coordinates sn-glycerol 3-phosphate. The glycerol site is built by Asp244 and Gln245. Residues Thr266 and Gly309 each contribute to the ADP site. Thr266, Gly309, Gln313, and Gly410 together coordinate ATP. Gly410 and Asn414 together coordinate ADP.

This sequence belongs to the FGGY kinase family. In terms of assembly, homotetramer and homodimer (in equilibrium). Post-translationally, the phosphoenolpyruvate-dependent sugar phosphotransferase system (PTS), including enzyme I, and histidine-containing protein (HPr) are required for the phosphorylation, which leads to the activation of the enzyme.

It carries out the reaction glycerol + ATP = sn-glycerol 3-phosphate + ADP + H(+). It functions in the pathway polyol metabolism; glycerol degradation via glycerol kinase pathway; sn-glycerol 3-phosphate from glycerol: step 1/1. With respect to regulation, activated by phosphorylation and inhibited by fructose 1,6-bisphosphate (FBP). Its function is as follows. Key enzyme in the regulation of glycerol uptake and metabolism. Catalyzes the phosphorylation of glycerol to yield sn-glycerol 3-phosphate. This is Glycerol kinase from Staphylococcus aureus (strain bovine RF122 / ET3-1).